The chain runs to 513 residues: Maturase K (513 aa).

The protein belongs to the intron maturase 2 family. MatK subfamily.

Its subcellular location is the plastid. The protein localises to the chloroplast. Its function is as follows. Usually encoded in the trnK tRNA gene intron. Probably assists in splicing its own and other chloroplast group II introns. In Byblis liniflora (Carnivorous plant), this protein is Maturase K.